The primary structure comprises 616 residues: MMEGSRQTRVSRPYKISESSKVYRWAEHSGTVLQRLNEQRLRGLFCDVVLVADEQRLPAHRNLLAVCSDYFNSMFTLGMREAFQKEVELIGASYIGLKAVVDFLYGGELVLDGGNIDYVLETAHLLQIWTAVDFCCEYLEQEVSEDNYLYLQELASIYSLKRLDAFIDSFILSRFGTLSFTPAFLQNISMQKLCAYLGSSEVQRECEHDLLQAALQWLTQQPEREAHAYQVLENIHFPLIPKNDLLHRVKPAVCSLLPREANCEGFIEEAVRYHNSLAAQPVMQTKRTALRTTQECLLFVGGEVSERCLELSDDTCYLDAQSEQWVKETPLPARRSHHCVAVLGGFIFIAGGSFSRDNGGDAASNLLYRYDPRCKQWIKVASMNQRRVDFYLASIEDMLVAVGGRNENGALSSVETYSPKTDSWSYVAGLPRFTYGHAGTIYKDFVYISGGHDYQIGPYRKNLLCYDHRTDVWEERRPMSTARGWHSMCSLGDSIYSIGGSDDSLESMERFDVLGVEAYSPQCNQWTRVAPLLHANSESGVAVWEGRIYILGGYSWENTAFSKTVQVYDRDKDKWSEGTELPKAIAGVSACVCALKPRLEDKKKKGKGKRPQDHGQ.

The region spanning 46-113 (CDVVLVADEQ…LYGGELVLDG (68 aa)) is the BTB domain. One can recognise a BACK domain in the interval 148-250 (YLYLQELASI…PKNDLLHRVK (103 aa)). 6 Kelch repeats span residues 296-345 (CLLF…VLGG), 346-397 (FIFI…SIED), 398-444 (MLVA…IYKD), 446-493 (VYIS…SLGD), 494-546 (SIYS…VWEG), and 547-595 (RIYI…VCAL).

As to quaternary structure, interacts with CUL3.

Its pathway is protein modification; protein ubiquitination. In terms of biological role, probable substrate-specific adapter of an E3 ubiquitin-protein ligase complex which mediates the ubiquitination and subsequent proteasomal degradation of target proteins. The protein is Kelch-like protein 36 (KLHL36) of Bos taurus (Bovine).